The following is a 464-amino-acid chain: Protein FAM90A15 (464 aa).

3 disordered regions span residues 1-42 (MMAR…DPRL), 70-389 (PATL…HDGA), and 415-437 (HSPE…SEAP). 2 stretches are compositionally biased toward basic and acidic residues: residues 74–89 (GKKE…KPRV) and 97–114 (NKDK…DPQR). A compositionally biased stretch (low complexity) spans 180–197 (LASLSPLRKASLSSSSSL).

Belongs to the FAM90 family.

This is Protein FAM90A15 from Homo sapiens (Human).